Here is a 243-residue protein sequence, read N- to C-terminus: Purine nucleoside phosphorylase YfiH (243 aa).

Residues histidine 71, cysteine 107, and histidine 124 each coordinate Zn(2+).

Belongs to the purine nucleoside phosphorylase YfiH/LACC1 family. In terms of assembly, homodimer. It depends on Cu(2+) as a cofactor. The cofactor is Zn(2+).

The catalysed reaction is adenosine + phosphate = alpha-D-ribose 1-phosphate + adenine. It catalyses the reaction S-methyl-5'-thioadenosine + phosphate = 5-(methylsulfanyl)-alpha-D-ribose 1-phosphate + adenine. It carries out the reaction inosine + phosphate = alpha-D-ribose 1-phosphate + hypoxanthine. The enzyme catalyses adenosine + H2O + H(+) = inosine + NH4(+). Its function is as follows. Purine nucleoside enzyme that catalyzes the phosphorolysis of adenosine and inosine nucleosides, yielding D-ribose 1-phosphate and the respective free bases, adenine and hypoxanthine. Also catalyzes the phosphorolysis of S-methyl-5'-thioadenosine into adenine and S-methyl-5-thio-alpha-D-ribose 1-phosphate. Also has adenosine deaminase activity. May also act as a polyphenol oxidase: able to oxidize syringaldazine and 2,2'-azino-bis(3-ethylbenzthiazoline-6-sulfonic acid) (ABTS) in vitro. This Escherichia coli (strain K12) protein is Purine nucleoside phosphorylase YfiH.